The sequence spans 725 residues: MESGRGSSTPPGPIAALGMPDTGPGSSSLGKLQALPVGPRAHCGDPVSLAAAGDGSPDIGPTGELSGSLKIPNRDSGIDSPSSSVAGENFPCEEGLEAGPSPTVLGAHAEMALDSQVPKVTPQEEADSDVGEEPDSENTPQKADKDAGLAQHSGPQKLLHIAQELLHTEETYVKRLHLLDQVFCTRLTDAGIPPEVIMGIFSNISSIHRFHGQFLLPELKTRITEEWDTNPRLGDILQKLAPFLKMYGEYVKNFDRAVGLVSTWTQRSPLFKDVVHSIQKQEVCGNLTLQHHMLEPVQRVPRYELLLKDYLKRLPQDAPDRKDAERSLELISTAANHSNAAIRKVEKMHKLLEVYEQLGGEEDIVNPANELIKEGQIQKLSAKNGTPQDRHLFLFNSMILYCVPKLRLMGQKFSVREKMDISGLQVQDIVKPNTAHTFIITGRKRSLELQTRTEEEKKEWIQIIQATIEKHKQNSETFKAFGGAFSQDEDPSLSPDMPITSTSPVEPVVTTEGSSGAAGLEPRKLSSKTRRDKEKQSCKSCGETFNSITKRRHHCKLCGAVICGKCSEFKAENSRQSRVCRDCFLTQPVAPESTEKTPTADPQPSLLCGPLRLSESGETWSEVWAAIPMSDPQVLHLQGGSQDGRLPRTIPLPSCKLSVPDPEERLDSGHVWKLQWAKQSWYLSASSAELQQQWLETLSTAAHGDTAQDSPGALQLQVPMGAAAP.

Positions 1 to 151 (MESGRGSSTP…KADKDAGLAQ (151 aa)) are disordered. Over residues 124 to 136 (EEADSDVGEEPDS) the composition is skewed to acidic residues. A Phosphoserine modification is found at Ser-128. The region spanning 157 to 341 (KLLHIAQELL…STAANHSNAA (185 aa)) is the DH domain. The PH 1 domain maps to 370–469 (ELIKEGQIQK…WIQIIQATIE (100 aa)). The tract at residues 487 to 532 (QDEDPSLSPDMPITSTSPVEPVVTTEGSSGAAGLEPRKLSSKTRRD) is disordered. Low complexity predominate over residues 500 to 512 (TSTSPVEPVVTTE). Over residues 521 to 532 (EPRKLSSKTRRD) the composition is skewed to basic and acidic residues. The segment at 532–588 (DKEKQSCKSCGETFNSITKRRHHCKLCGAVICGKCSEFKAENSRQSRVCRDCFLTQP) adopts an FYVE-type zinc-finger fold. Zn(2+) is bound by residues Cys-538, Cys-541, Cys-555, Cys-558, Cys-563, Cys-566, Cys-580, and Cys-583. The PH 2 domain maps to 604–703 (PSLLCGPLRL…WLETLSTAAH (100 aa)). The disordered stretch occupies residues 703 to 725 (HGDTAQDSPGALQLQVPMGAAAP).

Its subcellular location is the cytoplasm. It is found in the cytoskeleton. Its function is as follows. Promotes the formation of filopodia. May activate CDC42, a member of the Ras-like family of Rho- and Rac proteins, by exchanging bound GDP for free GTP. Plays a role in regulating the actin cytoskeleton and cell shape. This Homo sapiens (Human) protein is FYVE, RhoGEF and PH domain-containing protein 3 (FGD3).